Reading from the N-terminus, the 1182-residue chain is DNA-directed RNA polymerase subunit beta' (1182 aa).

Residues C59, C61, C74, and C77 each coordinate Zn(2+). Residues D449, D451, and D453 each coordinate Mg(2+). Positions 794, 868, 875, and 878 each coordinate Zn(2+).

This sequence belongs to the RNA polymerase beta' chain family. In terms of assembly, the RNAP catalytic core consists of 2 alpha, 1 beta, 1 beta' and 1 omega subunit. When a sigma factor is associated with the core the holoenzyme is formed, which can initiate transcription. The cofactor is Mg(2+). Zn(2+) is required as a cofactor.

It carries out the reaction RNA(n) + a ribonucleoside 5'-triphosphate = RNA(n+1) + diphosphate. Functionally, DNA-dependent RNA polymerase catalyzes the transcription of DNA into RNA using the four ribonucleoside triphosphates as substrates. The polypeptide is DNA-directed RNA polymerase subunit beta' (Clostridium acetobutylicum (strain ATCC 824 / DSM 792 / JCM 1419 / IAM 19013 / LMG 5710 / NBRC 13948 / NRRL B-527 / VKM B-1787 / 2291 / W)).